The chain runs to 428 residues: FAD-dependent monooxygenase kojA (428 aa).

FAD-binding positions include 52–60 (RLHKGPHYP) and 328–329 (SV).

Belongs to the aromatic-ring hydroxylase family. FAD is required as a cofactor.

Its function is as follows. Probable FAD-dependent monooxygenase; part of the gene cluster that mediates the biosynthesis of 5-hydroxy-2-hydroxymethyl-1,4-pyrone, also know as kojic acid, a by-product in the fermentation process of malting rice that acts as a chelation agent. Glucose might be converted to kojic acid by a combination of dehydrogenase and dehydratase reactions involving kojA and probably additional enzymes. The chain is FAD-dependent monooxygenase kojA from Aspergillus flavus (strain ATCC 200026 / FGSC A1120 / IAM 13836 / NRRL 3357 / JCM 12722 / SRRC 167).